Consider the following 385-residue polypeptide: S-adenosylmethionine synthase (385 aa).

His15 contributes to the ATP binding site. Asp17 is a Mg(2+) binding site. Glu43 contributes to the K(+) binding site. L-methionine is bound by residues Glu56 and Gln99. The tract at residues 99–109 (QSPDINQGVDR) is flexible loop. ATP is bound by residues 164–166 (DAK), 230–231 (RF), Asp239, 245–246 (RK), Ala262, and Lys266. Position 239 (Asp239) interacts with L-methionine. Lys270 provides a ligand contact to L-methionine.

It belongs to the AdoMet synthase family. As to quaternary structure, homotetramer; dimer of dimers. The cofactor is Mg(2+). Requires K(+) as cofactor.

The protein resides in the cytoplasm. The enzyme catalyses L-methionine + ATP + H2O = S-adenosyl-L-methionine + phosphate + diphosphate. The protein operates within amino-acid biosynthesis; S-adenosyl-L-methionine biosynthesis; S-adenosyl-L-methionine from L-methionine: step 1/1. In terms of biological role, catalyzes the formation of S-adenosylmethionine (AdoMet) from methionine and ATP. The overall synthetic reaction is composed of two sequential steps, AdoMet formation and the subsequent tripolyphosphate hydrolysis which occurs prior to release of AdoMet from the enzyme. The sequence is that of S-adenosylmethionine synthase from Hamiltonella defensa subsp. Acyrthosiphon pisum (strain 5AT).